A 671-amino-acid chain; its full sequence is DNA ligase (671 aa).

NAD(+) is bound by residues 32 to 36, 81 to 82, and E113; these read DAEYD and SL. Catalysis depends on K115, which acts as the N6-AMP-lysine intermediate. 4 residues coordinate NAD(+): R136, E173, K290, and K314. The Zn(2+) site is built by C408, C411, C426, and C432. Positions 593–671 constitute a BRCT domain; sequence EIDSPFAGKT…EAEMIRLLGA (79 aa).

This sequence belongs to the NAD-dependent DNA ligase family. LigA subfamily. The cofactor is Mg(2+). Mn(2+) serves as cofactor.

The enzyme catalyses NAD(+) + (deoxyribonucleotide)n-3'-hydroxyl + 5'-phospho-(deoxyribonucleotide)m = (deoxyribonucleotide)n+m + AMP + beta-nicotinamide D-nucleotide.. In terms of biological role, DNA ligase that catalyzes the formation of phosphodiester linkages between 5'-phosphoryl and 3'-hydroxyl groups in double-stranded DNA using NAD as a coenzyme and as the energy source for the reaction. It is essential for DNA replication and repair of damaged DNA. This Salmonella newport (strain SL254) protein is DNA ligase.